Reading from the N-terminus, the 250-residue chain is Probable transcriptional regulatory protein SYNAS_07390 (250 aa).

Belongs to the TACO1 family.

The protein resides in the cytoplasm. The protein is Probable transcriptional regulatory protein SYNAS_07390 of Syntrophus aciditrophicus (strain SB).